Reading from the N-terminus, the 114-residue chain is Cytochrome c oxidase assembly protein cox16, mitochondrial (114 aa).

Residues 29–49 (PFLLFGLPFMSVIVAGSFILT) traverse the membrane as a helical segment.

The protein belongs to the COX16 family.

Its subcellular location is the mitochondrion inner membrane. Required for the assembly of the mitochondrial respiratory chain complex IV (CIV), also known as cytochrome c oxidase. May participate in merging the COX1 and COX2 assembly lines. This chain is Cytochrome c oxidase assembly protein cox16, mitochondrial (cox-9), found in Neurospora crassa (strain ATCC 24698 / 74-OR23-1A / CBS 708.71 / DSM 1257 / FGSC 987).